Reading from the N-terminus, the 526-residue chain is GMP synthase [glutamine-hydrolyzing] (526 aa).

A Glutamine amidotransferase type-1 domain is found at 4 to 204; it reads KIVVLDFGSQ…AHAICGCSGD (201 aa). The active-site Nucleophile is the cysteine 87. Catalysis depends on residues histidine 178 and glutamate 180. The 197-residue stretch at 205–401 folds into the GMPS ATP-PPase domain; the sequence is WTPASFVEEQ…LDVPDPIVGR (197 aa). 232-238 contacts ATP; that stretch reads SGGVDSS.

In terms of assembly, homodimer.

The enzyme catalyses XMP + L-glutamine + ATP + H2O = GMP + L-glutamate + AMP + diphosphate + 2 H(+). The protein operates within purine metabolism; GMP biosynthesis; GMP from XMP (L-Gln route): step 1/1. Catalyzes the synthesis of GMP from XMP. This chain is GMP synthase [glutamine-hydrolyzing], found in Salinibacter ruber (strain DSM 13855 / M31).